Reading from the N-terminus, the 217-residue chain is FMN-dependent NADH:quinone oxidoreductase (217 aa).

FMN contacts are provided by residues S10, S17 to S19, and S137 to G140.

The protein belongs to the azoreductase type 1 family. Homodimer. The cofactor is FMN.

It catalyses the reaction 2 a quinone + NADH + H(+) = 2 a 1,4-benzosemiquinone + NAD(+). The enzyme catalyses N,N-dimethyl-1,4-phenylenediamine + anthranilate + 2 NAD(+) = 2-(4-dimethylaminophenyl)diazenylbenzoate + 2 NADH + 2 H(+). Quinone reductase that provides resistance to thiol-specific stress caused by electrophilic quinones. In terms of biological role, also exhibits azoreductase activity. Catalyzes the reductive cleavage of the azo bond in aromatic azo compounds to the corresponding amines. The chain is FMN-dependent NADH:quinone oxidoreductase from Streptomyces avermitilis (strain ATCC 31267 / DSM 46492 / JCM 5070 / NBRC 14893 / NCIMB 12804 / NRRL 8165 / MA-4680).